Consider the following 338-residue polypeptide: MAKAKIAVNGYGTIGKRVADAVRAQDDMEVVGISKTKPNYEAAVAHRLGYDIYAPAANLEAFEKAGMPAAGSIEEMLEKADLVVDCTPGGIGEKNKPIYEKVGIKAIWQGGESHPIAGFSFNAESNYEQAVGRDLTRVVSCNTTALCRAISTIDRELGVNKVRASLSRRAVDPNEIKKGPVDAIVLNPVKLPSHHGPDVRSVLPHINITTAAIKVPTTLMHVHTVNMEVNKDCTAEDVKNIFGSQSRIRLVGQGITSTAEIIEFARDIGRPRHDMWELCIWPESITVTDKELYFFHAVHQESIVVPENVDAIRAMMELESDGAKSIEKTNKAIGLYNK.

Residues T13 to I14 and G111 each bind NAD(+). Residue S140–N142 participates in D-glyceraldehyde 3-phosphate binding. The active-site Nucleophile is C141. R169 contacts NAD(+). H195–G196 contacts D-glyceraldehyde 3-phosphate. An NAD(+)-binding site is contributed by Q300.

It belongs to the glyceraldehyde-3-phosphate dehydrogenase family. As to quaternary structure, homotetramer.

It localises to the cytoplasm. It catalyses the reaction D-glyceraldehyde 3-phosphate + phosphate + NADP(+) = (2R)-3-phospho-glyceroyl phosphate + NADPH + H(+). The catalysed reaction is D-glyceraldehyde 3-phosphate + phosphate + NAD(+) = (2R)-3-phospho-glyceroyl phosphate + NADH + H(+). It participates in carbohydrate degradation; glycolysis; pyruvate from D-glyceraldehyde 3-phosphate: step 1/5. This is Glyceraldehyde-3-phosphate dehydrogenase 2 from Methanosarcina barkeri (strain Fusaro / DSM 804).